The primary structure comprises 284 residues: Diaminopimelate epimerase (284 aa).

Positions 21, 54, and 74 each coordinate substrate. Residue Cys-83 is the Proton donor of the active site. Substrate is bound by residues 84–85, Asn-167, Asn-200, and 218–219; these read GN and ER. The active-site Proton acceptor is the Cys-227. 228-229 is a binding site for substrate; it reads GS.

The protein belongs to the diaminopimelate epimerase family. As to quaternary structure, homodimer.

Its subcellular location is the cytoplasm. The enzyme catalyses (2S,6S)-2,6-diaminopimelate = meso-2,6-diaminopimelate. It participates in amino-acid biosynthesis; L-lysine biosynthesis via DAP pathway; DL-2,6-diaminopimelate from LL-2,6-diaminopimelate: step 1/1. In terms of biological role, catalyzes the stereoinversion of LL-2,6-diaminopimelate (L,L-DAP) to meso-diaminopimelate (meso-DAP), a precursor of L-lysine and an essential component of the bacterial peptidoglycan. In Buchnera aphidicola subsp. Acyrthosiphon pisum (strain APS) (Acyrthosiphon pisum symbiotic bacterium), this protein is Diaminopimelate epimerase.